The primary structure comprises 207 residues: MSDRLLVLVRHGQSEWNLKNLFTGWKDPDITAQGVDEAKRAGKLLKAEGFVFDAAFVSELTRAKHTLSLILEELGQTSLPVKSDIALNERDYGDLSGLNKDDARKKWGEEQVHIWRRSYDVAPPGGESLKDTLARTLPYYVQEILPGVLRGERTIVTAHGNSLRALIMVLERLSPEAILKRELATGVPIIYRLRADATVESKTDLAG.

Residues R10–N17, T23–G24, R62, E89–Y92, K100, R116–R117, and G160–N161 contribute to the substrate site. The Tele-phosphohistidine intermediate role is filled by H11. The active-site Proton donor/acceptor is E89.

Belongs to the phosphoglycerate mutase family. BPG-dependent PGAM subfamily. As to quaternary structure, homodimer.

It carries out the reaction (2R)-2-phosphoglycerate = (2R)-3-phosphoglycerate. Its pathway is carbohydrate degradation; glycolysis; pyruvate from D-glyceraldehyde 3-phosphate: step 3/5. Functionally, catalyzes the interconversion of 2-phosphoglycerate and 3-phosphoglycerate. The polypeptide is 2,3-bisphosphoglycerate-dependent phosphoglycerate mutase (Afipia carboxidovorans (strain ATCC 49405 / DSM 1227 / KCTC 32145 / OM5) (Oligotropha carboxidovorans)).